Reading from the N-terminus, the 95-residue chain is MKITKAEVDAVALLARLELTPEETETFTGQMDAILAYVEKLNELDTSGIIPTSHAVPVENAFRDDAVRPSIGVENALANAPDRVEGFFRVPKVIE.

The protein belongs to the GatC family. In terms of assembly, heterotrimer of A, B and C subunits.

It carries out the reaction L-glutamyl-tRNA(Gln) + L-glutamine + ATP + H2O = L-glutaminyl-tRNA(Gln) + L-glutamate + ADP + phosphate + H(+). The enzyme catalyses L-aspartyl-tRNA(Asn) + L-glutamine + ATP + H2O = L-asparaginyl-tRNA(Asn) + L-glutamate + ADP + phosphate + 2 H(+). In terms of biological role, allows the formation of correctly charged Asn-tRNA(Asn) or Gln-tRNA(Gln) through the transamidation of misacylated Asp-tRNA(Asn) or Glu-tRNA(Gln) in organisms which lack either or both of asparaginyl-tRNA or glutaminyl-tRNA synthetases. The reaction takes place in the presence of glutamine and ATP through an activated phospho-Asp-tRNA(Asn) or phospho-Glu-tRNA(Gln). This chain is Aspartyl/glutamyl-tRNA(Asn/Gln) amidotransferase subunit C, found in Geobacter metallireducens (strain ATCC 53774 / DSM 7210 / GS-15).